The chain runs to 472 residues: Uronate isomerase (472 aa).

It belongs to the metallo-dependent hydrolases superfamily. Uronate isomerase family.

The enzyme catalyses D-glucuronate = D-fructuronate. It catalyses the reaction aldehydo-D-galacturonate = keto-D-tagaturonate. The protein operates within carbohydrate metabolism; pentose and glucuronate interconversion. The sequence is that of Uronate isomerase from Xanthomonas euvesicatoria pv. vesicatoria (strain 85-10) (Xanthomonas campestris pv. vesicatoria).